The sequence spans 466 residues: Ribulose bisphosphate carboxylase large chain (466 aa).

At Lys5 the chain carries N6,N6,N6-trimethyllysine. Substrate contacts are provided by Asn114 and Thr164. The active-site Proton acceptor is Lys166. Residue Lys168 coordinates substrate. Mg(2+) contacts are provided by Lys192, Asp194, and Glu195. An N6-carboxylysine modification is found at Lys192. Residue His285 is the Proton acceptor of the active site. Substrate is bound by residues Arg286, His318, and Ser370.

The protein belongs to the RuBisCO large chain family. Type I subfamily. Heterohexadecamer of 8 large chains and 8 small chains; disulfide-linked. The disulfide link is formed within the large subunit homodimers. The cofactor is Mg(2+). The disulfide bond which can form in the large chain dimeric partners within the hexadecamer appears to be associated with oxidative stress and protein turnover.

Its subcellular location is the plastid. The protein resides in the chloroplast. The enzyme catalyses 2 (2R)-3-phosphoglycerate + 2 H(+) = D-ribulose 1,5-bisphosphate + CO2 + H2O. It catalyses the reaction D-ribulose 1,5-bisphosphate + O2 = 2-phosphoglycolate + (2R)-3-phosphoglycerate + 2 H(+). In terms of biological role, ruBisCO catalyzes two reactions: the carboxylation of D-ribulose 1,5-bisphosphate, the primary event in carbon dioxide fixation, as well as the oxidative fragmentation of the pentose substrate in the photorespiration process. Both reactions occur simultaneously and in competition at the same active site. This is Ribulose bisphosphate carboxylase large chain from Drosera binata (Fork-leaved sundew).